A 296-amino-acid polypeptide reads, in one-letter code: Bifunctional protein FolD (296 aa).

Residues 169 to 171 (GRG), T196, and V237 contribute to the NADP(+) site.

It belongs to the tetrahydrofolate dehydrogenase/cyclohydrolase family. In terms of assembly, homodimer.

The enzyme catalyses (6R)-5,10-methylene-5,6,7,8-tetrahydrofolate + NADP(+) = (6R)-5,10-methenyltetrahydrofolate + NADPH. It carries out the reaction (6R)-5,10-methenyltetrahydrofolate + H2O = (6R)-10-formyltetrahydrofolate + H(+). It functions in the pathway one-carbon metabolism; tetrahydrofolate interconversion. Catalyzes the oxidation of 5,10-methylenetetrahydrofolate to 5,10-methenyltetrahydrofolate and then the hydrolysis of 5,10-methenyltetrahydrofolate to 10-formyltetrahydrofolate. The polypeptide is Bifunctional protein FolD (Kocuria rhizophila (strain ATCC 9341 / DSM 348 / NBRC 103217 / DC2201)).